We begin with the raw amino-acid sequence, 316 residues long: Heme oxygenase 2 (316 aa).

The span at Met-1 to Asp-12 shows a compositional bias: acidic residues. The disordered stretch occupies residues Met-1–Arg-29. Ser-2 carries the N-acetylserine modification. The residue at position 2 (Ser-2) is a Phosphoserine. Residues Glu-13 to Gln-27 show a composition bias toward basic and acidic residues. Heme b is bound at residue His-45. HRM repeat units follow at residues Lys-264–Ala-269 and Ser-281–Thr-286. S-nitrosocysteine occurs at positions 265 and 282.

Belongs to the heme oxygenase family. Post-translationally, S-nitrosylated by BLVRB.

It localises to the microsome. The protein localises to the endoplasmic reticulum. It catalyses the reaction heme b + 3 reduced [NADPH--hemoprotein reductase] + 3 O2 = biliverdin IXalpha + CO + Fe(2+) + 3 oxidized [NADPH--hemoprotein reductase] + 3 H2O + H(+). Its function is as follows. Heme oxygenase cleaves the heme ring at the alpha methene bridge to form biliverdin. Biliverdin is subsequently converted to bilirubin by biliverdin reductase. Under physiological conditions, the activity of heme oxygenase is highest in the spleen, where senescent erythrocytes are sequestrated and destroyed. Heme oxygenase 2 could be implicated in the production of carbon monoxide in brain where it could act as a neurotransmitter. The chain is Heme oxygenase 2 (HMOX2) from Macaca fascicularis (Crab-eating macaque).